Here is a 130-residue protein sequence, read N- to C-terminus: Mini-ribonuclease 3 (130 aa).

The active site involves Asp-19. Residues 69–91 (EQDVVRRGRNAKGHGAPKSADPA) are disordered.

Belongs to the MrnC RNase family. Homodimer. The cofactor is Mg(2+).

The protein localises to the cytoplasm. Involved in correct processing of both the 5' and 3' ends of 23S rRNA precursor. Processes 30S rRNA precursor transcript even in absence of ribonuclease 3 (Rnc); Rnc processes 30S rRNA into smaller rRNA precursors. The polypeptide is Mini-ribonuclease 3 (Symbiobacterium thermophilum (strain DSM 24528 / JCM 14929 / IAM 14863 / T)).